The sequence spans 398 residues: Thyrotropin-releasing hormone receptor (398 aa).

The Extracellular segment spans residues Met1–Thr28. N-linked (GlcNAc...) asparagine glycosylation is found at Asn3 and Asn10. A helical membrane pass occupies residues Ile29–Met51. Topologically, residues Arg52–Asn61 are cytoplasmic. A helical membrane pass occupies residues Cys62 to Ile83. At Thr84–Leu99 the chain is on the extracellular side. Cysteines 98 and 179 form a disulfide. Residues Cys100–Ile121 form a helical membrane-spanning segment. At Glu122–Lys144 the chain is on the cytoplasmic side. Residues Ile145–Ile168 form a helical membrane-spanning segment. Over Ser169 to Leu193 the chain is Extracellular. A helical membrane pass occupies residues Met194 to Ala215. Topologically, residues Arg216–Lys266 are cytoplasmic. Residues Met267–Val288 form a helical membrane-spanning segment. Residues Asn289–Phe296 lie on the Extracellular side of the membrane. Residues Gln297–Ile319 form a helical membrane-spanning segment. The Cytoplasmic portion of the chain corresponds to Tyr320 to Ser398.

The protein belongs to the G-protein coupled receptor 1 family.

The protein localises to the cell membrane. Its function is as follows. Receptor for thyrotropin-releasing hormone (TRH). Upon ligand binding, this G-protein-coupled receptor triggers activation of the phosphatidylinositol (IP3)-calcium-protein kinase C (PKC) pathway. The sequence is that of Thyrotropin-releasing hormone receptor (TRHR) from Bos taurus (Bovine).